Here is a 276-residue protein sequence, read N- to C-terminus: Formamidopyrimidine-DNA glycosylase (276 aa).

P2 functions as the Schiff-base intermediate with DNA in the catalytic mechanism. E3 serves as the catalytic Proton donor. K58 (proton donor; for beta-elimination activity) is an active-site residue. DNA is bound by residues H92, R111, and K154. Residues 239 to 273 form an FPG-type zinc finger; sequence QVYGHAGEECNNCGTILEKIKVNGRGTTFCPHCQV. The Proton donor; for delta-elimination activity role is filled by R263.

Belongs to the FPG family. Monomer. Zn(2+) is required as a cofactor.

The enzyme catalyses Hydrolysis of DNA containing ring-opened 7-methylguanine residues, releasing 2,6-diamino-4-hydroxy-5-(N-methyl)formamidopyrimidine.. The catalysed reaction is 2'-deoxyribonucleotide-(2'-deoxyribose 5'-phosphate)-2'-deoxyribonucleotide-DNA = a 3'-end 2'-deoxyribonucleotide-(2,3-dehydro-2,3-deoxyribose 5'-phosphate)-DNA + a 5'-end 5'-phospho-2'-deoxyribonucleoside-DNA + H(+). Its function is as follows. Involved in base excision repair of DNA damaged by oxidation or by mutagenic agents. Acts as a DNA glycosylase that recognizes and removes damaged bases. Has a preference for oxidized purines, such as 7,8-dihydro-8-oxoguanine (8-oxoG). Has AP (apurinic/apyrimidinic) lyase activity and introduces nicks in the DNA strand. Cleaves the DNA backbone by beta-delta elimination to generate a single-strand break at the site of the removed base with both 3'- and 5'-phosphates. The protein is Formamidopyrimidine-DNA glycosylase of Lactobacillus johnsonii (strain CNCM I-12250 / La1 / NCC 533).